Here is a 195-residue protein sequence, read N- to C-terminus: Ribonuclease HII (195 aa).

In terms of domain architecture, RNase H type-2 spans 8-195 (WGVVGVDEAG…FAPVRRLLGG (188 aa)). A divalent metal cation is bound by residues D14, E15, and D106.

Belongs to the RNase HII family. Mn(2+) is required as a cofactor. Requires Mg(2+) as cofactor.

Its subcellular location is the cytoplasm. The enzyme catalyses Endonucleolytic cleavage to 5'-phosphomonoester.. Endonuclease that specifically degrades the RNA of RNA-DNA hybrids. The chain is Ribonuclease HII from Halorhodospira halophila (strain DSM 244 / SL1) (Ectothiorhodospira halophila (strain DSM 244 / SL1)).